The chain runs to 208 residues: MNRKSIAKGKLVRRFGVNIFEQPKYDKLLKKKPNPPGMHGRSRRTKVTEYGKQLIEKQKVKFTYGVSERQLTNVFKEARRQHGVTGDNLLALLERRIDNIVYRAGFAISRAHARQIVSHGIIILNGRRVTIPSITLRANDIIQVKEKDSLKKLVRSNIEKTSTLRKLPDWIEVNADALNVKIIRTPSRDEIPTLANEQMIVEYYSKRA.

Residues 95–157 (RRIDNIVYRA…DSLKKLVRSN (63 aa)) enclose the S4 RNA-binding domain.

Belongs to the universal ribosomal protein uS4 family. In terms of assembly, part of the 30S ribosomal subunit. Contacts protein S5. The interaction surface between S4 and S5 is involved in control of translational fidelity.

In terms of biological role, one of the primary rRNA binding proteins, it binds directly to 16S rRNA where it nucleates assembly of the body of the 30S subunit. With S5 and S12 plays an important role in translational accuracy. The protein is Small ribosomal subunit protein uS4 of Borrelia duttonii (strain Ly).